The primary structure comprises 314 residues: Acetaldehyde dehydrogenase 1/2 (314 aa).

Residue 12 to 15 (SGNI) participates in NAD(+) binding. Residue C130 is the Acyl-thioester intermediate of the active site. Residues 161–169 (SAGPGTRAN) and N288 each bind NAD(+).

Belongs to the acetaldehyde dehydrogenase family.

It catalyses the reaction acetaldehyde + NAD(+) + CoA = acetyl-CoA + NADH + H(+). In Rhizorhabdus wittichii (strain DSM 6014 / CCUG 31198 / JCM 15750 / NBRC 105917 / EY 4224 / RW1) (Sphingomonas wittichii), this protein is Acetaldehyde dehydrogenase 1/2.